The chain runs to 134 residues: Cytochrome b (134 aa).

Helical transmembrane passes span 33-53 (FGSL…FLAM), 77-98 (WILR…FLHV), and 113-133 (WNIG…GYVL). Residues histidine 83 and histidine 97 each contribute to the heme b site.

This sequence belongs to the cytochrome b family. In terms of assembly, the cytochrome bc1 complex contains 11 subunits: 3 respiratory subunits (MT-CYB, CYC1 and UQCRFS1), 2 core proteins (UQCRC1 and UQCRC2) and 6 low-molecular weight proteins (UQCRH/QCR6, UQCRB/QCR7, UQCRQ/QCR8, UQCR10/QCR9, UQCR11/QCR10 and a cleavage product of UQCRFS1). This cytochrome bc1 complex then forms a dimer. It depends on heme b as a cofactor.

The protein resides in the mitochondrion inner membrane. Its function is as follows. Component of the ubiquinol-cytochrome c reductase complex (complex III or cytochrome b-c1 complex) that is part of the mitochondrial respiratory chain. The b-c1 complex mediates electron transfer from ubiquinol to cytochrome c. Contributes to the generation of a proton gradient across the mitochondrial membrane that is then used for ATP synthesis. The protein is Cytochrome b (MT-CYB) of Rhinolophus hipposideros (Lesser horseshoe bat).